Here is a 246-residue protein sequence, read N- to C-terminus: tRNA (guanine-N(7)-)-methyltransferase (246 aa).

The interval 1–26 (MSDSSSSSENAPATPESPGRPPRGIK) is disordered. Positions 74, 99, 126, and 149 each coordinate S-adenosyl-L-methionine. D149 is an active-site residue. Substrate is bound by residues K153, D185, and 224 to 227 (TKFE).

The protein belongs to the class I-like SAM-binding methyltransferase superfamily. TrmB family.

The enzyme catalyses guanosine(46) in tRNA + S-adenosyl-L-methionine = N(7)-methylguanosine(46) in tRNA + S-adenosyl-L-homocysteine. The protein operates within tRNA modification; N(7)-methylguanine-tRNA biosynthesis. Catalyzes the formation of N(7)-methylguanine at position 46 (m7G46) in tRNA. In Chromohalobacter salexigens (strain ATCC BAA-138 / DSM 3043 / CIP 106854 / NCIMB 13768 / 1H11), this protein is tRNA (guanine-N(7)-)-methyltransferase.